The following is a 420-amino-acid chain: Lactosylceramide alpha-2,3-sialyltransferase (420 aa).

The disordered stretch occupies residues 1-39 (MRKKAAGGAERRPLKPRTEAAAAAPAGRAMPSDHSRMKL). The Cytoplasmic segment spans residues 1–67 (MRKKAAGGAE…MRRPNLLLKD (67 aa)). Basic and acidic residues predominate over residues 9–18 (AERRPLKPRT). Over residues 20 to 29 (AAAAAPAGRA) the composition is skewed to low complexity. The chain crosses the membrane as a helical span at residues 68–88 (ILKCTLLLFGVWILFYILKLN). Residues 89–420 (HTTEECDMKR…DLSGGIHSEF (332 aa)) are Lumenal-facing. A disulfide bond links Cys197 and Cys355. An N-linked (GlcNAc...) asparagine glycan is attached at Asn238.

Belongs to the glycosyltransferase 29 family.

It localises to the golgi apparatus membrane. The enzyme catalyses a beta-D-Gal-(1-&gt;4)-beta-D-Glc-(1&lt;-&gt;1)-Cer(d18:1(4E)) + CMP-N-acetyl-beta-neuraminate = a ganglioside GM3 (d18:1(4E)) + CMP + H(+). It catalyses the reaction ganglioside GA2 (d18:1(4E)/18:0) + CMP-N-acetyl-beta-neuraminate = ganglioside GM2 (d18:1(4E)/18:0) + CMP + H(+). It carries out the reaction a beta-D-Gal-(1&lt;-&gt;1')-ceramide + CMP-N-acetyl-beta-neuraminate = N-acetyl-alpha-neuraminosyl-(2-&gt;3)-beta-D-galactosyl-(1&lt;-&gt;1')-ceramide + CMP + H(+). The catalysed reaction is ganglioside GA1 (d18:1(4E)/18:0) + CMP-N-acetyl-beta-neuraminate = ganglioside GM1 (d18:1(4E)/18:0) + CMP + H(+). Functionally, transfers the sialyl group (N-acetyl-alpha-neuraminyl or NeuAc) from CMP-NeuAc to the non-reducing terminal galactose (Gal) of glycosphingolipids forming gangliosides (important molecules involved in the regulation of multiple cellular processes, including cell proliferation and differentiation, apoptosis, embryogenesis, development, and oncogenesis). Mainly involved in the biosynthesis of ganglioside GM3 but can also use different glycolipids as substrate acceptors such as D-galactosylceramide (GalCer), asialo-GM2 (GA2) and asialo-GM1 (GA1), although less preferentially than beta-D-Gal-(1-&gt;4)-beta-D-Glc-(1&lt;-&gt;1)-Cer (LacCer). The polypeptide is Lactosylceramide alpha-2,3-sialyltransferase (ST3GAL5) (Bos taurus (Bovine)).